We begin with the raw amino-acid sequence, 288 residues long: Hydroxyethylthiazole kinase (288 aa).

Methionine 55 is a binding site for substrate. ATP-binding residues include asparagine 131 and serine 177. Glycine 204 lines the substrate pocket.

It belongs to the Thz kinase family. Mg(2+) is required as a cofactor.

The catalysed reaction is 5-(2-hydroxyethyl)-4-methylthiazole + ATP = 4-methyl-5-(2-phosphooxyethyl)-thiazole + ADP + H(+). It functions in the pathway cofactor biosynthesis; thiamine diphosphate biosynthesis; 4-methyl-5-(2-phosphoethyl)-thiazole from 5-(2-hydroxyethyl)-4-methylthiazole: step 1/1. Functionally, catalyzes the phosphorylation of the hydroxyl group of 4-methyl-5-beta-hydroxyethylthiazole (THZ). This Haloquadratum walsbyi (strain DSM 16790 / HBSQ001) protein is Hydroxyethylthiazole kinase.